The sequence spans 102 residues: P antigen family member 4 (102 aa).

Residues 1–10 (MSARVRSRSR) are compositionally biased toward basic residues. The disordered stretch occupies residues 1–102 (MSARVRSRSR…KTKEAGDGQP (102 aa)). Phosphoserine; by CLK2 is present on Ser-7. Ser-9 is modified (phosphoserine; by HIPK1 and CLK2). The span at 45 to 85 (GQEREGTPPIEERKVEGDCQEMDLEKTRSERGDGSDVKEKT) shows a compositional bias: basic and acidic residues. The residue at position 51 (Thr-51) is a Phosphothreonine; by HIPK1 and CLK2. Position 71 is a phosphothreonine; by CLK2 (Thr-71). A phosphoserine; by CLK2 mark is found at Ser-73 and Ser-79. Phosphothreonine; by CLK2 occurs at positions 85 and 94.

Belongs to the GAGE family. In terms of assembly, interacts with JUN. In terms of processing, HIPK1-mediated phosphorylation at Thr-51 leads to the compaction of its intrinsically disordered conformation and is critical for its ability to potentiate the transcriptional activator activity of JUN inspite of a reduced interaction with JUN. CLK2-mediated phosphorylation at multiple Ser and Thr residues attenuates its ability to potentiate JUN transcriptional activator activity. Expressed at basal lvels in the adult normal prostate gland but is highly up-regulated in the fetal prostate and prostate cancer cells. Preferentially expressed in normal male and female reproductive tissues, testis, fallopian tube, uterus, and placenta, as well as in testicular cancer, uterine cancer, cervical cancer and kidney cancer.

The protein localises to the cytoplasm. It localises to the nucleus. Its subcellular location is the mitochondrion. Functionally, intrinsically disordered protein that potentiates the transcriptional activator activity of JUN. Protects cells from stress-induced apoptosis by inhibiting reactive oxygen species (ROS) production and via regulation of the MAPK signaling pathway. The sequence is that of P antigen family member 4 (PAGE4) from Homo sapiens (Human).